Consider the following 415-residue polypeptide: MNIDRIDKPTREQYEEYILKNQPFIITGVVNNWISFNKKWIPSQNIEDDYFLSILENKGIPVREIGIDVGEWLGKTKNINFSIFWKKWREHYFNFKNEKNNQSNNNNNNNNNNNNNNNNNNNNNNNNNNNNNNNNNNKPKYYLASLPIQTYFKELINDFEIPEIPKEQNKNGNLWIGFKDQITPLHHDWSSGDPGMDGLHAIIIGRKQFKLFDPIVNVNCFKRKKEWGKFHQSEFDLDNPDFNKFPEAKNFKIIEIQLNQGEMLFIPKLWWHHVKTLEPSISINFWFQHIGSELLKSNKLWCHMEQYLNAVFEMDATKISNDKFKKIIKYLTNDNNGGDGDGDGDGDQIIQKYKDDNLKLIQLPKFIDSFSNAVNNPIFKNHPKKDQFKFEITEKVNQWIEEKKKEINENKIVIL.

The interval N97–K140 is disordered. The span at N104 to N137 shows a compositional bias: low complexity. The JmjC domain occupies N127–C302.

The sequence is that of JmjC domain-containing protein C (jcdC) from Dictyostelium discoideum (Social amoeba).